Consider the following 107-residue polypeptide: MEKRRAEIAAAIITAPTILAMMSTVLRALIFSSCIKNFLIFSMLKHSSYCLAILVYQKNRKAVMWGSDLFYHLRGFSSIFEQKTYIYESILSLQRKNRVRFKLPRII.

A helical transmembrane segment spans residues alanine 9–phenylalanine 31.

Its subcellular location is the membrane. This is an uncharacterized protein from Archaeoglobus fulgidus (strain ATCC 49558 / DSM 4304 / JCM 9628 / NBRC 100126 / VC-16).